The sequence spans 224 residues: 7-cyano-7-deazaguanine synthase (224 aa).

An ATP-binding site is contributed by 12-22 (LSGGLDSSTVT). Zn(2+)-binding residues include Cys-193, Cys-201, Cys-204, and Cys-207.

This sequence belongs to the QueC family. Zn(2+) serves as cofactor.

It carries out the reaction 7-carboxy-7-deazaguanine + NH4(+) + ATP = 7-cyano-7-deazaguanine + ADP + phosphate + H2O + H(+). It participates in purine metabolism; 7-cyano-7-deazaguanine biosynthesis. In terms of biological role, catalyzes the ATP-dependent conversion of 7-carboxy-7-deazaguanine (CDG) to 7-cyano-7-deazaguanine (preQ(0)). The protein is 7-cyano-7-deazaguanine synthase of Prochlorococcus marinus (strain MIT 9301).